We begin with the raw amino-acid sequence, 273 residues long: MVRVGIDVGNTAIKVVTQASTAVEAAQPARTRGPQLRSISLRDPEWITKCIEHLQTLAEKVAACESRECESVCYDVRVASVNRGSAEPLVFALDEAFFQCIRVRFVTHEDVSMPIDVNFPERVGIDRLLGAEAAFRRHAAPLIVVDAGTTVTVDFVSAEGVFRGGAILPGLEMQTAALAAGTDALPKLDWASHRCREMPEGPGRDTVAAMRLGVLASVAGAVERLLRIYGGAATLVVTGGDAGCLVDALPAECDAVEEPHLVAQALLDLMLHE.

ATP is bound at residue 7 to 14 (DVGNTAIK). Substrate contacts are provided by residues F119 and 124–127 (GIDR). D126 functions as the Proton acceptor in the catalytic mechanism. D146 is a binding site for K(+). T149 provides a ligand contact to ATP. Residue T206 participates in substrate binding.

This sequence belongs to the type III pantothenate kinase family. Homodimer. NH4(+) serves as cofactor. It depends on K(+) as a cofactor.

Its subcellular location is the cytoplasm. It carries out the reaction (R)-pantothenate + ATP = (R)-4'-phosphopantothenate + ADP + H(+). Its pathway is cofactor biosynthesis; coenzyme A biosynthesis; CoA from (R)-pantothenate: step 1/5. Catalyzes the phosphorylation of pantothenate (Pan), the first step in CoA biosynthesis. The protein is Type III pantothenate kinase of Rhodopirellula baltica (strain DSM 10527 / NCIMB 13988 / SH1).